Reading from the N-terminus, the 430-residue chain is Serine--tRNA ligase (430 aa).

Thr-237 to Glu-239 contacts L-serine. Arg-268–Glu-270 lines the ATP pocket. Glu-291 contributes to the L-serine binding site. Glu-355–Ser-358 is a binding site for ATP. Residue Ser-391 coordinates L-serine.

Belongs to the class-II aminoacyl-tRNA synthetase family. Type-1 seryl-tRNA synthetase subfamily. Homodimer. The tRNA molecule binds across the dimer.

The protein resides in the cytoplasm. It catalyses the reaction tRNA(Ser) + L-serine + ATP = L-seryl-tRNA(Ser) + AMP + diphosphate + H(+). The enzyme catalyses tRNA(Sec) + L-serine + ATP = L-seryl-tRNA(Sec) + AMP + diphosphate + H(+). The protein operates within aminoacyl-tRNA biosynthesis; selenocysteinyl-tRNA(Sec) biosynthesis; L-seryl-tRNA(Sec) from L-serine and tRNA(Sec): step 1/1. In terms of biological role, catalyzes the attachment of serine to tRNA(Ser). Is also able to aminoacylate tRNA(Sec) with serine, to form the misacylated tRNA L-seryl-tRNA(Sec), which will be further converted into selenocysteinyl-tRNA(Sec). This Magnetococcus marinus (strain ATCC BAA-1437 / JCM 17883 / MC-1) protein is Serine--tRNA ligase.